The primary structure comprises 74 residues: Exodeoxyribonuclease 7 small subunit (74 aa).

The protein belongs to the XseB family. Heterooligomer composed of large and small subunits.

Its subcellular location is the cytoplasm. The catalysed reaction is Exonucleolytic cleavage in either 5'- to 3'- or 3'- to 5'-direction to yield nucleoside 5'-phosphates.. Functionally, bidirectionally degrades single-stranded DNA into large acid-insoluble oligonucleotides, which are then degraded further into small acid-soluble oligonucleotides. The protein is Exodeoxyribonuclease 7 small subunit of Neisseria gonorrhoeae (strain ATCC 700825 / FA 1090).